A 265-amino-acid chain; its full sequence is Dehydrogenase RED2 (265 aa).

The chain crosses the membrane as a helical span at residues 6-26 (SFLLSKLFLCIALCTAYVAFS). Residue Asn45 is glycosylated (N-linked (GlcNAc...) asparagine). A helical membrane pass occupies residues 47–67 (TSTVFGLTIVAIGLSALSSWL). N-linked (GlcNAc...) asparagine glycosylation occurs at Asn74. Val89 lines the NADP(+) pocket. An N-linked (GlcNAc...) asparagine glycan is attached at Asn127. Positions 136 and 163 each coordinate NADP(+). Asn176 carries an N-linked (GlcNAc...) asparagine glycan. Ser216 (proton donor) is an active-site residue. Positions 228 and 232 each coordinate NADP(+). The active-site Proton acceptor is Tyr228. Lys232 acts as the Lowers pKa of active site Tyr in catalysis.

The protein belongs to the short-chain dehydrogenases/reductases (SDR) family.

It localises to the membrane. The catalysed reaction is a primary alcohol + NAD(+) = an aldehyde + NADH + H(+). It catalyses the reaction a secondary alcohol + NAD(+) = a ketone + NADH + H(+). Its pathway is mycotoxin biosynthesis. In terms of biological role, dehydrogenase; part of the Tox1B locus, one of the 2 loci that mediate the biosynthesis of T-toxin, a family of linear polyketides 37 to 45 carbons in length, of which the major component is 41 carbons, and which leads to high virulence to maize. One of the PKSs (PKS1 or PKS2) could synthesize a precursor, used subsequently by the other PKS as starter unit, to add additional carbons. Variability in the length of the final carbon backbone C35-47 could be achieved by varying the number of condensation cycles, or use of different starter or extender units or might be due to decarboxylation of the penultimate product, catalyzed by DEC1. Additional proteins are required for the biosynthesis of T-toxin, including oxidoreductases RED1, RED2, RED3, LAM1 and OXI1, as well as esterase TOX9. This is Dehydrogenase RED2 from Cochliobolus heterostrophus (strain C4 / ATCC 48331 / race T) (Southern corn leaf blight fungus).